The chain runs to 362 residues: Ferrochelatase (362 aa).

Fe cation contacts are provided by His212 and Glu294.

Belongs to the ferrochelatase family.

The protein localises to the cytoplasm. It carries out the reaction heme b + 2 H(+) = protoporphyrin IX + Fe(2+). It participates in porphyrin-containing compound metabolism; protoheme biosynthesis; protoheme from protoporphyrin-IX: step 1/1. Catalyzes the ferrous insertion into protoporphyrin IX. This chain is Ferrochelatase, found in Leptospira biflexa.